A 206-amino-acid chain; its full sequence is Small ribosomal subunit protein uS4 (206 aa).

The 65-residue stretch at 96-160 (CRLDNVVYRM…AQLRIVQALE (65 aa)) folds into the S4 RNA-binding domain.

This sequence belongs to the universal ribosomal protein uS4 family. In terms of assembly, part of the 30S ribosomal subunit. Contacts protein S5. The interaction surface between S4 and S5 is involved in control of translational fidelity.

In terms of biological role, one of the primary rRNA binding proteins, it binds directly to 16S rRNA where it nucleates assembly of the body of the 30S subunit. Its function is as follows. With S5 and S12 plays an important role in translational accuracy. The protein is Small ribosomal subunit protein uS4 of Pseudomonas putida (strain GB-1).